Here is a 251-residue protein sequence, read N- to C-terminus: Cytochrome c oxidase subunit 2 (251 aa).

The signal sequence occupies residues 1-15 (MLNLLYNQIFNVILN). Over 16-41 (DVPTPYNTYFQDSATPNQEGILELHD) the chain is Mitochondrial intermembrane. Residues 42–62 (NIMFYLLVILGLVSWLLFTIT) traverse the membrane as a helical segment. Residues 63–82 (RTYSKNPIAYKYIKHGQTIE) are Mitochondrial matrix-facing. Residues 83–103 (IIWTIFPAVILLIIAFPSFIL) form a helical membrane-spanning segment. The Mitochondrial intermembrane portion of the chain corresponds to 104-251 (LYLCDEVISP…PAFLEWLNEQ (148 aa)). Residues histidine 186, cysteine 221, glutamate 223, cysteine 225, histidine 229, and methionine 232 each coordinate Cu cation. Residue glutamate 223 participates in Mg(2+) binding.

Belongs to the cytochrome c oxidase subunit 2 family. Component of the cytochrome c oxidase (complex IV, CIV), a multisubunit enzyme composed of a catalytic core of 3 subunits and several supernumerary subunits. The complex exists as a monomer or a dimer and forms supercomplexes (SCs) in the inner mitochondrial membrane with ubiquinol-cytochrome c oxidoreductase (cytochrome b-c1 complex, complex III, CIII). Cu cation is required as a cofactor. In terms of processing, the signal sequence of COX2 is processed by IMP1.

It is found in the mitochondrion inner membrane. It catalyses the reaction 4 Fe(II)-[cytochrome c] + O2 + 8 H(+)(in) = 4 Fe(III)-[cytochrome c] + 2 H2O + 4 H(+)(out). In terms of biological role, component of the cytochrome c oxidase, the last enzyme in the mitochondrial electron transport chain which drives oxidative phosphorylation. The respiratory chain contains 3 multisubunit complexes succinate dehydrogenase (complex II, CII), ubiquinol-cytochrome c oxidoreductase (cytochrome b-c1 complex, complex III, CIII) and cytochrome c oxidase (complex IV, CIV), that cooperate to transfer electrons derived from NADH and succinate to molecular oxygen, creating an electrochemical gradient over the inner membrane that drives transmembrane transport and the ATP synthase. Cytochrome c oxidase is the component of the respiratory chain that catalyzes the reduction of oxygen to water. Electrons originating from reduced cytochrome c in the intermembrane space (IMS) are transferred via the dinuclear copper A center (CU(A)) of subunit 2 and heme A of subunit 1 to the active site in subunit 1, a binuclear center (BNC) formed by heme A3 and copper B (CU(B)). The BNC reduces molecular oxygen to 2 water molecules using 4 electrons from cytochrome c in the IMS and 4 protons from the mitochondrial matrix. This chain is Cytochrome c oxidase subunit 2 (COX2), found in Lachancea thermotolerans (strain ATCC 56472 / CBS 6340 / NRRL Y-8284) (Yeast).